A 386-amino-acid chain; its full sequence is N-terminal EF-hand calcium-binding protein 2 (386 aa).

Omega-N-methylarginine is present on Arg10. Arg42 bears the Asymmetric dimethylarginine mark. EF-hand domains lie at 60–95 and 96–129; these read GGTAVILDIFRRADKNDDGKLSLEEFQLFFADGVLN and EKELEDLFHTIDSDNTNHVDTKELCDYFVDHMGD. Ca(2+) is bound by residues Asp73, Asn75, Asp77, Lys79, Glu84, Asp107, Asp109, Thr111, His113, and Glu118. Residues 170-201 are a coiled coil; the sequence is LKETANQIQSLLSSVESAVEAIEEQTSQLRQN. One can recognise an ABM domain in the interval 286–375; the sequence is QLVRQEMAVC…SQPEALSRIL (90 aa).

In terms of assembly, interacts (calcium-dependent) with ADORA2A and GRM5. Expressed in brain. Expressed in the spinal dorsal horn with especially strong expression in lamina IIi; found in excitory synaptic boutons and in ependymal cells (at protein level).

It localises to the cytoplasm. Its subcellular location is the cell projection. The protein resides in the dendrite. The protein localises to the axon. It is found in the cell membrane. Its function is as follows. May act as a signaling scaffold protein that senses intracellular calcium. Can modulate ligand-induced internalization of ADORA2A and coupling efficiency of mGluR5/GRM5; for both receptors may regulate signaling activity such as promoting MAPK1/3 (ERK1/2) activation. The sequence is that of N-terminal EF-hand calcium-binding protein 2 (NECAB2) from Homo sapiens (Human).